The chain runs to 319 residues: Myoblast determination protein 1 (319 aa).

Residue Met1 forms a Peptide (Met-Gly) (interchain with G-Cter in ubiquitin) linkage. Residue Lys104 is modified to N6-methyllysine; by EHMT2. The bHLH domain occupies 109–160; that stretch reads DRRKAATMRERRRLSKVNEAFETLKRCTSSNPNQRLPKVEILRNAIRYIEGL. Disordered regions lie at residues 174-221 and 266-319; these read AAAA…SGAR and APAL…YQVL. 2 stretches are compositionally biased toward polar residues: residues 197-207 and 308-319; these read SDASSPRSNCS and ASANPNPIYQVL.

Efficient DNA binding requires dimerization with another bHLH protein. Seems to form active heterodimers with ITF-2. Interacts with SUV39H1. Interacts with DDX5. Interacts with CHD2. Interacts with TSC22D3. Interacts with SETD3. Interacts with P-TEFB complex; promotes the transcriptional activity of MYOD1 through its CDK9-mediated phosphorylation. Interacts with CSRP3. Interacts with NUPR1. Post-translationally, phosphorylated by CDK9. This phosphorylation promotes its function in muscle differentiation. In terms of processing, acetylated by a complex containing EP300 and PCAF. The acetylation is essential to activate target genes. Conversely, its deacetylation by SIRT1 inhibits its function. Ubiquitinated on the N-terminus; which is required for proteasomal degradation. Post-translationally, methylation at Lys-104 by EHMT2/G9a inhibits myogenic activity.

Its subcellular location is the nucleus. Functionally, acts as a transcriptional activator that promotes transcription of muscle-specific target genes and plays a role in muscle differentiation. Together with MYF5 and MYOG, co-occupies muscle-specific gene promoter core region during myogenesis. Induces fibroblasts to differentiate into myoblasts. Interacts with and is inhibited by the twist protein. This interaction probably involves the basic domains of both proteins. This Sus scrofa (Pig) protein is Myoblast determination protein 1 (MYOD1).